The sequence spans 239 residues: Small ribosomal subunit protein uS2 (239 aa).

Belongs to the universal ribosomal protein uS2 family.

The chain is Small ribosomal subunit protein uS2 from Francisella tularensis subsp. holarctica (strain FTNF002-00 / FTA).